Reading from the N-terminus, the 115-residue chain is U3-lycotoxin-Ls1p (115 aa).

The signal sequence occupies residues 1-20 (MKFVLLFGVLLVTLFSYSSA). The propeptide occupies 21–44 (EMFDDFDQADEDELLSLIEKEEAR). Cystine bridges form between Cys48–Cys63, Cys55–Cys72, Cys62–Cys87, and Cys74–Cys85.

Belongs to the neurotoxin 19 (CSTX) family. 01 subfamily. In terms of tissue distribution, expressed by the venom gland.

It is found in the secreted. This chain is U3-lycotoxin-Ls1p, found in Lycosa singoriensis (Wolf spider).